A 327-amino-acid polypeptide reads, in one-letter code: Lactosylceramide 4-alpha-galactosyltransferase (327 aa).

Residues 166 to 168 carry the DXD motif motif; that stretch reads DTD.

This sequence belongs to the glycosyltransferase 32 family.

The protein resides in the golgi apparatus membrane. It catalyses the reaction a beta-D-Gal-(1-&gt;4)-beta-D-Glc-(1&lt;-&gt;1)-Cer(d18:1(4E)) + UDP-alpha-D-galactose = a globoside Gb3Cer (d18:1(4E)) + UDP + H(+). The catalysed reaction is a beta-D-Gal-(1&lt;-&gt;1')-ceramide + UDP-alpha-D-galactose = alpha-D-Gal-(1-&gt;4)-beta-D-Gal-(1&lt;-&gt;1')-Cer + UDP + H(+). The protein operates within glycolipid biosynthesis. Its function is as follows. Catalyzes the transfer of galactose from UDP-alpha-D-galactose to lactosylceramide/beta-D-galactosyl-(1-&gt;4)-beta-D-glucosyl-(1&lt;-&gt;1)-ceramide(d18:1(4E)) to produce globotriaosylceramide/globoside Gb3Cer (d18:1(4E)). Also able to transfer galactose to galactosylceramide/beta-D-Gal-(1&lt;-&gt;1')-Cer. Globoside Gb3Cer is a glycosphingolipid of the globo serie, one of the major types of neutral root structures of glycosphingolipids, that constitute a significant portion of mammalian cell membranes. This is Lactosylceramide 4-alpha-galactosyltransferase (A4GALT) from Gorilla gorilla gorilla (Western lowland gorilla).